The chain runs to 109 residues: Protein GOLVEN 5 (109 aa).

Residues 1–24 (MTNITSSFLCLLILLLFCLSFGYS) form the signal peptide. Positions 25 to 96 (LHGDKDEVLS…EEDDLVAYTA (72 aa)) are excised as a propeptide. The segment at 54 to 88 (KKAQVRGRSGQEFSKETTKMMMKKTTKKETNVEEE) is disordered. Tyr98 bears the Sulfotyrosine mark. Pro106 bears the Hydroxyproline mark.

This sequence belongs to the RGF family. In terms of assembly, binds to LRR receptor-like serine/threonine-protein kinases RGI1, RGI2 and RGI3 to trigger their dimerization with SERK proteins and subsequent signaling. In terms of tissue distribution, expressed in root tips.

The protein resides in the secreted. Its function is as follows. Signaling peptide (root growth factor) that maintains the postembryonic root stem cell niche in a PIN2-traffic dependent manner. Root growth factor that regulates the pattern of root growth and lateral root development by modulating the length and the number of cortical cells in the root apical meristem (RAM), and the anticlinal asymmetric cell divisions in lateral root initiation cells. Influences the longitudinal growth rate in the primary root in response to phosphate ion (Pi)-deprivation. In Arabidopsis thaliana (Mouse-ear cress), this protein is Protein GOLVEN 5.